The following is a 358-amino-acid chain: UDP-N-acetylglucosamine--N-acetylmuramyl-(pentapeptide) pyrophosphoryl-undecaprenol N-acetylglucosamine transferase (358 aa).

Residues threonine 12–glycine 14, arginine 165, serine 195, and glutamine 290 contribute to the UDP-N-acetyl-alpha-D-glucosamine site.

Belongs to the glycosyltransferase 28 family. MurG subfamily.

The protein localises to the cell membrane. It carries out the reaction di-trans,octa-cis-undecaprenyl diphospho-N-acetyl-alpha-D-muramoyl-L-alanyl-D-glutamyl-meso-2,6-diaminopimeloyl-D-alanyl-D-alanine + UDP-N-acetyl-alpha-D-glucosamine = di-trans,octa-cis-undecaprenyl diphospho-[N-acetyl-alpha-D-glucosaminyl-(1-&gt;4)]-N-acetyl-alpha-D-muramoyl-L-alanyl-D-glutamyl-meso-2,6-diaminopimeloyl-D-alanyl-D-alanine + UDP + H(+). It functions in the pathway cell wall biogenesis; peptidoglycan biosynthesis. Cell wall formation. Catalyzes the transfer of a GlcNAc subunit on undecaprenyl-pyrophosphoryl-MurNAc-pentapeptide (lipid intermediate I) to form undecaprenyl-pyrophosphoryl-MurNAc-(pentapeptide)GlcNAc (lipid intermediate II). This Clostridium tetani (strain Massachusetts / E88) protein is UDP-N-acetylglucosamine--N-acetylmuramyl-(pentapeptide) pyrophosphoryl-undecaprenol N-acetylglucosamine transferase.